The chain runs to 186 residues: dCTP deaminase, dUMP-forming (186 aa).

DCTP-binding positions include 99–104 (KSSIAR), aspartate 117, 125–127 (TLE), glutamine 146, tyrosine 159, lysine 166, and glutamine 170. Glutamate 127 (proton donor/acceptor) is an active-site residue.

This sequence belongs to the dCTP deaminase family. In terms of assembly, homotrimer.

The enzyme catalyses dCTP + 2 H2O = dUMP + NH4(+) + diphosphate. The protein operates within pyrimidine metabolism; dUMP biosynthesis; dUMP from dCTP: step 1/1. Functionally, bifunctional enzyme that catalyzes both the deamination of dCTP to dUTP and the hydrolysis of dUTP to dUMP without releasing the toxic dUTP intermediate. This is dCTP deaminase, dUMP-forming from Methanosphaerula palustris (strain ATCC BAA-1556 / DSM 19958 / E1-9c).